Here is a 408-residue protein sequence, read N- to C-terminus: Aminoacylase-1 (408 aa).

Residue histidine 80 participates in Zn(2+) binding. Aspartate 82 is an active-site residue. Zn(2+) is bound at residue aspartate 113. Glutamate 147 functions as the Proton acceptor in the catalytic mechanism. Zn(2+) is bound by residues glutamate 148, glutamate 175, and histidine 373.

This sequence belongs to the peptidase M20A family. As to quaternary structure, homodimer. Interacts with SPHK1. Requires Zn(2+) as cofactor. In terms of tissue distribution, expression is highest in kidney, strong in brain and weaker in placenta and spleen.

The protein resides in the cytoplasm. It carries out the reaction an N-acyl-L-amino acid + H2O = an L-alpha-amino acid + a carboxylate. It catalyses the reaction N-acetyl-L-methionine + H2O = L-methionine + acetate. The catalysed reaction is N-acetyl-L-glutamine + H2O = L-glutamine + acetate. Its function is as follows. Catalyzes the hydrolysis of N-acetylated amino acids to acetate and free amino acids. This Homo sapiens (Human) protein is Aminoacylase-1 (ACY1).